Here is a 117-residue protein sequence, read N- to C-terminus: Immunoglobulin heavy variable 4-38-2 (117 aa).

Residues 1–19 form the signal peptide; it reads MKHLWFFLLLVAAPRWVLS. The segment at 20 to 44 is framework-1; it reads QVQLQESGPGLVKPSETLSLTCTVS. The Ig-like domain occupies 20 to 117; the sequence is QVQLQESGPG…ADTAVYYCAR (98 aa). A disulfide bond links cysteine 41 and cysteine 115. Residues 45–53 are complementarity-determining-1; sequence GYSISSGYY. The framework-2 stretch occupies residues 54–70; that stretch reads WGWIRQPPGKGLEWIGS. A complementarity-determining-2 region spans residues 71 to 77; it reads IYHSGST. Residues 78-115 are framework-3; the sequence is YYNPSLKSRVTISVDTSKNQFSLKLSSVTAADTAVYYC. The tract at residues 116–117 is complementarity-determining-3; it reads AR.

In terms of assembly, immunoglobulins are composed of two identical heavy chains and two identical light chains; disulfide-linked.

It is found in the secreted. Its subcellular location is the cell membrane. V region of the variable domain of immunoglobulin heavy chains that participates in the antigen recognition. Immunoglobulins, also known as antibodies, are membrane-bound or secreted glycoproteins produced by B lymphocytes. In the recognition phase of humoral immunity, the membrane-bound immunoglobulins serve as receptors which, upon binding of a specific antigen, trigger the clonal expansion and differentiation of B lymphocytes into immunoglobulins-secreting plasma cells. Secreted immunoglobulins mediate the effector phase of humoral immunity, which results in the elimination of bound antigens. The antigen binding site is formed by the variable domain of one heavy chain, together with that of its associated light chain. Thus, each immunoglobulin has two antigen binding sites with remarkable affinity for a particular antigen. The variable domains are assembled by a process called V-(D)-J rearrangement and can then be subjected to somatic hypermutations which, after exposure to antigen and selection, allow affinity maturation for a particular antigen. The polypeptide is Immunoglobulin heavy variable 4-38-2 (Homo sapiens (Human)).